The chain runs to 279 residues: Lectin 9 (279 aa).

Residues 1 to 23 (MALSSALIKIFITFLFLQNHVNS) form the signal peptide. N-linked (GlcNAc...) asparagine glycosylation is found at Asn-116, Asn-139, Asn-235, and Asn-272.

It belongs to the leguminous lectin family.

Its function is as follows. May be involved in arbuscular mycorrhizal (AM) symbiosis with AM fungi. This Medicago truncatula (Barrel medic) protein is Lectin 9.